Reading from the N-terminus, the 635-residue chain is BTB/POZ domain and ankyrin repeat-containing protein NPR2 (635 aa).

The region spanning 97-191 (SDADVDVADG…LYTGKLRPAP (95 aa)) is the BTB domain. Residues 138–152 (AAGGGGGGGGGGGER) show a composition bias toward gly residues. Residues 138-157 (AAGGGGGGGGGGGERTGGRP) are disordered. The segment at 194–208 (VVSCADPMCPHDSCP) adopts a C2HC NPR-type zinc-finger fold. Residues C197, C202, H204, and C207 each coordinate Zn(2+). ANK repeat units lie at residues 317 to 347 (KRVR…TLDD), 349 to 376 (NALH…NLNL), and 380 to 409 (RGYT…AVSQ). The interval 439-576 (ESNKDRLCID…FLEDDLPDSP (138 aa)) is salicylic acid-binding core (SBC). R484 contributes to the salicylate binding site.

Belongs to the plant 'ANKYRIN-BTB/POZ' family. 'NPR1-like' subfamily. Interacts with NRR. Interacts with TGAL1 and TGAL11.

It is found in the nucleus. The protein operates within protein modification; protein ubiquitination. Salicylic acid (SA)-binding substrate-specific adapter of an E3 ubiquitin-protein ligase complex (CUL3-RBX1-BTB) which mediates the ubiquitination and subsequent proteasomal degradation of target proteins. May be involved in regulating basal defense responses against pathogens, and may be involved in crosstalk between SA- and JA-dependent signaling pathways. Does not seem to be involved in defense response against the bacterial blight disease caused by Xanthomonas oryzae pv. oryzae (Xoo). Over-expression of NPR2/NH2 does not confer disease resistance to Xoo. This is BTB/POZ domain and ankyrin repeat-containing protein NPR2 from Oryza sativa subsp. japonica (Rice).